The primary structure comprises 382 residues: Sphingoid long-chain base transporter RSB1 (382 aa).

Over 1 to 34 the chain is Extracellular; the sequence is MSNATNNTLGSLLPQLEAAANSNSLYGGMVPNLR. N-linked (GlcNAc...) asparagine glycans are attached at residues Asn-3 and Asn-6. The helical transmembrane segment at 35-55 threads the bilayer; the sequence is FNITMIVIWGILLTIHVVQLL. Topologically, residues 56–57 are cytoplasmic; it reads MR. The chain crosses the membrane as a helical span at residues 58 to 78; the sequence is QYWFSIAFICTGILEVLGFIG. At 79-90 the chain is on the extracellular side; that stretch reads RTWSHSNVADMD. The chain crosses the membrane as a helical span at residues 91-111; the sequence is AFLLNMICLTIAPVFTMGGIY. Over 112–135 the chain is Cytoplasmic; sequence YQLAKLIEVYGHRFSLLPSPMAYS. Residues 136 to 156 form a helical membrane-spanning segment; sequence FIFICSDIVSLVVQAVGGGLC. Residues 157 to 171 lie on the Extracellular side of the membrane; it reads GVAVTDGTSTTTGNH. A helical membrane pass occupies residues 172-192; sequence VFIAGLAIQVASMAIFLMLWF. Residues 193-241 lie on the Cytoplasmic side of the membrane; sequence HFLFRIYISVRWEHINSRPISLSLLKISQTEVDYLYREKFHFLRLEPKR. Residues 242-262 traverse the membrane as a helical segment; the sequence is WVFHYFNLAITVAVLTIFTRC. Over 263–281 the chain is Extracellular; the sequence is CYRLAELVVGWDGYLITHE. Residues 282–302 traverse the membrane as a helical segment; the sequence is WYFIILDALMMAIATVTLTIF. Topologically, residues 303-382 are cytoplasmic; that stretch reads HPGFAFKGRS…LFSSKKKAKL (80 aa).

It belongs to the lipid-translocating exporter (LTE) (TC 9.A.26.1) family.

Its subcellular location is the cell membrane. Catalyzes the ATP-dependent translocation of sphingoid long-chain bases (LCBs) from the cytoplasmic site toward the extracytoplasmic side of the membrane (flip-flop). Involved in the establishment of the functional lipid asymmetry of the plasma membrane. Regulates intracellular levels of LCBs, sphingolipid precursors that are growth inhibitory at increased levels. The polypeptide is Sphingoid long-chain base transporter RSB1 (RSB1) (Saccharomyces cerevisiae (strain ATCC 204508 / S288c) (Baker's yeast)).